The following is a 69-amino-acid chain: DNA-directed RNA polymerase subunit epsilon (69 aa).

The protein belongs to the RNA polymerase subunit epsilon family. RNAP is composed of a core of 2 alpha, a beta and a beta' subunit. The core is associated with a delta subunit, and at least one of epsilon or omega. When a sigma factor is associated with the core the holoenzyme is formed, which can initiate transcription.

It catalyses the reaction RNA(n) + a ribonucleoside 5'-triphosphate = RNA(n+1) + diphosphate. A non-essential component of RNA polymerase (RNAP). The chain is DNA-directed RNA polymerase subunit epsilon from Shouchella clausii (strain KSM-K16) (Alkalihalobacillus clausii).